A 657-amino-acid chain; its full sequence is Transcription factor 12 (657 aa).

Polar residues predominate over residues 1–20 (MDEKGGTTSWGTSGQPSPSY). 5 disordered regions span residues 1–76 (MDEK…SGLS), 89–285 (LGSP…QTGD), 297–340 (PDHT…YENS), 459–555 (VSAQ…ERRM), and 628–657 (KVSAVSAEPPTPHPGSHPGLSETTNPMGHM). The span at 30–43 (HYSDHLNDSRKGTH) shows a compositional bias: basic and acidic residues. Polar residues-rich tracts occupy residues 49–70 (TPFSNSNLIGKTSGRGSFSLYS) and 93–112 (AQLSSSGKPETPYYSFSATS). Positions 68–89 (LYSRDSGLSGCQSSLLRQELGL) are leucine-zipper. The Nuclear localization signal motif lies at 130 to 136 (KKVRKVP). 3 stretches are compositionally biased toward polar residues: residues 168–193 (MFASTFFMQDGTHSSSDLWSSSNGMS), 202–216 (GTSTSHMSQSGSYGS), and 230–254 (VSPTDINTSLPPMSSFHRGSTSSSP). Residues 300-311 (TSSSFPSNPSTP) show a composition bias toward low complexity. Positions 312 to 340 (VGSPSPLTGASQWSRSGGQAPSSPNYENS) are enriched in polar residues. 3 stretches are compositionally biased toward basic and acidic residues: residues 493–505 (IKSEHKEKDENIH), 511–526 (DDMKSDDESSQKDIKV), and 543–555 (PEQKIEREKERRM). Residues 552–605 (ERRMANNARERLRVRDINEAFKELGRMCQLHLKSEKPQTKLLILHQAVAVILSL) enclose the bHLH domain. The interval 607–630 (QQVRERNLNPKAACLKRREEEKVS) is class A specific domain. The span at 648–657 (SETTNPMGHM) shows a compositional bias: polar residues.

As to quaternary structure, efficient DNA binding requires dimerization with another bHLH protein. Forms homo- or heterooligomers with myogenin, E12 and ITF2 proteins.

The protein resides in the nucleus. Its function is as follows. Transcriptional regulator. Involved in the initiation of neuronal differentiation. Activates transcription by binding to the E box-containing promoter. The sequence is that of Transcription factor 12 (TCF12) from Gallus gallus (Chicken).